Reading from the N-terminus, the 193-residue chain is Ion-translocating oxidoreductase complex subunit A (193 aa).

6 helical membrane-spanning segments follow: residues 5 to 25, 39 to 59, 62 to 82, 102 to 122, 134 to 154, and 171 to 191; these read LLLF…FLGL, IGMG…SWLM, FILV…LVIA, LLGI…VALL, AVYG…FAAI, and SIGL…SGLV.

The protein belongs to the NqrDE/RnfAE family. As to quaternary structure, the complex is composed of six subunits: RnfA, RnfB, RnfC, RnfD, RnfE and RnfG.

It localises to the cell inner membrane. Its function is as follows. Part of a membrane-bound complex that couples electron transfer with translocation of ions across the membrane. In Proteus mirabilis (strain HI4320), this protein is Ion-translocating oxidoreductase complex subunit A.